A 124-amino-acid polypeptide reads, in one-letter code: Fluoride-specific ion channel FluC (124 aa).

4 consecutive transmembrane segments (helical) span residues 4 to 24, 32 to 52, 68 to 88, and 101 to 121; these read ILAI…LAGG, AFPW…GLIM, GLTI…YETF, and LNVL…IMAA. Na(+) is bound by residues Gly-75 and Thr-78.

The protein belongs to the fluoride channel Fluc/FEX (TC 1.A.43) family.

It is found in the cell inner membrane. The enzyme catalyses fluoride(in) = fluoride(out). Na(+) is not transported, but it plays an essential structural role and its presence is essential for fluoride channel function. Its function is as follows. Fluoride-specific ion channel. Important for reducing fluoride concentration in the cell, thus reducing its toxicity. This Geobacter sulfurreducens (strain ATCC 51573 / DSM 12127 / PCA) protein is Fluoride-specific ion channel FluC.